Consider the following 63-residue polypeptide: Synergistic-type venom protein C9S3, chain 1 (63 aa).

Disulfide bonds link Cys-3/Cys-24, Cys-17/Cys-42, and Cys-46/Cys-57.

Belongs to the three-finger toxin family. Short-chain subfamily. Aminergic toxin sub-subfamily. In terms of assembly, heterodimer of C9S3 chain 1 and chain 2 (AC P01409); disulfide-linked. In terms of tissue distribution, expressed by the venom gland.

The protein resides in the secreted. In terms of biological role, this protein shows a synergetic toxic effect in that it enhances the toxicity of other toxins. This is Synergistic-type venom protein C9S3, chain 1 from Dendroaspis angusticeps (Eastern green mamba).